We begin with the raw amino-acid sequence, 299 residues long: Acetaldehyde dehydrogenase (299 aa).

Cys126 serves as the catalytic Acyl-thioester intermediate. NAD(+) is bound by residues 157–165 (SAGPGTRQN) and Asn267.

This sequence belongs to the acetaldehyde dehydrogenase family.

It carries out the reaction acetaldehyde + NAD(+) + CoA = acetyl-CoA + NADH + H(+). This is Acetaldehyde dehydrogenase (mhpF) from Carboxydothermus hydrogenoformans (strain ATCC BAA-161 / DSM 6008 / Z-2901).